The chain runs to 158 residues: uncharacterized protein (158 aa).

An N-terminal signal peptide occupies residues 1 to 22; it reads MKKIPNKLLAVSAFLTITTTYA. Residues 120-140 form a helical membrane-spanning segment; that stretch reads LTGIIEYDTKFENHYETLVEA.

The protein localises to the cell membrane. This is an uncharacterized protein from Bacillus cereus.